Here is a 369-residue protein sequence, read N- to C-terminus: Probable dual-specificity RNA methyltransferase RlmN (369 aa).

E108 functions as the Proton acceptor in the catalytic mechanism. A Radical SAM core domain is found at 114–351 (YPDRATLCIS…IAQGVSCTVR (238 aa)). C121 and C362 are joined by a disulfide. C128, C132, and C135 together coordinate [4Fe-4S] cluster. S-adenosyl-L-methionine is bound by residues 183–184 (GE), S217, 240–242 (SLH), and N319. The active-site S-methylcysteine intermediate is the C362.

It belongs to the radical SAM superfamily. RlmN family. [4Fe-4S] cluster serves as cofactor.

Its subcellular location is the cytoplasm. The catalysed reaction is adenosine(2503) in 23S rRNA + 2 reduced [2Fe-2S]-[ferredoxin] + 2 S-adenosyl-L-methionine = 2-methyladenosine(2503) in 23S rRNA + 5'-deoxyadenosine + L-methionine + 2 oxidized [2Fe-2S]-[ferredoxin] + S-adenosyl-L-homocysteine. It catalyses the reaction adenosine(37) in tRNA + 2 reduced [2Fe-2S]-[ferredoxin] + 2 S-adenosyl-L-methionine = 2-methyladenosine(37) in tRNA + 5'-deoxyadenosine + L-methionine + 2 oxidized [2Fe-2S]-[ferredoxin] + S-adenosyl-L-homocysteine. Its function is as follows. Specifically methylates position 2 of adenine 2503 in 23S rRNA and position 2 of adenine 37 in tRNAs. The chain is Probable dual-specificity RNA methyltransferase RlmN from Rhodococcus erythropolis (strain PR4 / NBRC 100887).